A 150-amino-acid polypeptide reads, in one-letter code: Probable cyclic pyranopterin monophosphate synthase (150 aa).

Substrate is bound by residues 68–70 and 104–105; these read YCH and ME. D119 is an active-site residue.

This sequence belongs to the MoaC family. Homohexamer; trimer of dimers.

The catalysed reaction is (8S)-3',8-cyclo-7,8-dihydroguanosine 5'-triphosphate = cyclic pyranopterin phosphate + diphosphate. It participates in cofactor biosynthesis; molybdopterin biosynthesis. Functionally, catalyzes the conversion of (8S)-3',8-cyclo-7,8-dihydroguanosine 5'-triphosphate to cyclic pyranopterin monophosphate (cPMP). This Thermoplasma volcanium (strain ATCC 51530 / DSM 4299 / JCM 9571 / NBRC 15438 / GSS1) protein is Probable cyclic pyranopterin monophosphate synthase.